Consider the following 245-residue polypeptide: E3 ubiquitin-protein ligase RNF138 (245 aa).

Residues Cys18 to Arg58 form an RING-type zinc finger. Residues Cys86, Cys89, His101, and Cys105 each contribute to the Zn(2+) site. Residues Cys86–Cys105 form a C2HC RNF-type zinc finger. The tract at residues Val128–His154 is disordered. The residue at position 142 (Thr142) is a Phosphothreonine. C2H2-type zinc fingers lie at residues Phe157–His180 and Val187–His215. The UIM domain occupies Leu225–Val243.

As to quaternary structure, interacts with NLK. Interacts with XRCC5/Ku80. Interacts with RBBP8/CtIP. Auto-ubiquitinated.

Its subcellular location is the chromosome. It catalyses the reaction S-ubiquitinyl-[E2 ubiquitin-conjugating enzyme]-L-cysteine + [acceptor protein]-L-lysine = [E2 ubiquitin-conjugating enzyme]-L-cysteine + N(6)-ubiquitinyl-[acceptor protein]-L-lysine.. It functions in the pathway protein modification; protein ubiquitination. Its function is as follows. E3 ubiquitin-protein ligase involved in DNA damage response by promoting DNA resection and homologous recombination. Recruited to sites of double-strand breaks following DNA damage and specifically promotes double-strand break repair via homologous recombination. Two different, non-exclusive, mechanisms have been proposed. According to a report, regulates the choice of double-strand break repair by favoring homologous recombination over non-homologous end joining (NHEJ): acts by mediating ubiquitination of XRCC5/Ku80, leading to remove the Ku complex from DNA breaks, thereby promoting homologous recombination. According to another report, cooperates with UBE2Ds E2 ubiquitin ligases (UBE2D1, UBE2D2, UBE2D3 or UBE2D4) to promote homologous recombination by mediating ubiquitination of RBBP8/CtIP. Together with NLK, involved in the ubiquitination and degradation of TCF/LEF. Also exhibits auto-ubiquitination activity in combination with UBE2K. May act as a negative regulator in the Wnt/beta-catenin-mediated signaling pathway. The sequence is that of E3 ubiquitin-protein ligase RNF138 from Mus musculus (Mouse).